The chain runs to 214 residues: uncharacterized protein (214 aa).

Residue Y129 is the Proton acceptor of the active site.

This sequence belongs to the NAD(P)-dependent epimerase/dehydratase family.

This is an uncharacterized protein from Bacillus subtilis (strain 168).